Here is a 354-residue protein sequence, read N- to C-terminus: Allantoicase (354 aa).

This sequence belongs to the allantoicase family.

It carries out the reaction allantoate + H2O = (S)-ureidoglycolate + urea. Its pathway is nitrogen metabolism; (S)-allantoin degradation; (S)-ureidoglycolate from allantoate (aminidohydrolase route): step 1/1. Utilization of purines as secondary nitrogen sources, when primary sources are limiting. The polypeptide is Allantoicase (alc-1) (Neurospora crassa (strain ATCC 24698 / 74-OR23-1A / CBS 708.71 / DSM 1257 / FGSC 987)).